The primary structure comprises 616 residues: Adenylosuccinate synthetase 1 (616 aa).

Residues 1-27 form a disordered region; that stretch reads MDKQAERGQSAGPVKTPQGTQPPAHNY. Residues 17–27 are compositionally biased toward polar residues; the sequence is PQGTQPPAHNY. GTP-binding positions include 87–93 and 117–119; these read GDEGKGK and GHT. Aspartate 88 serves as the catalytic Proton acceptor. Aspartate 88 and glycine 117 together coordinate Mg(2+). IMP-binding positions include 88-91, 115-118, threonine 202, lysine 216, glutamine 328, threonine 343, and lysine 472; these read DEGK and NAGH. Histidine 118 acts as the Proton donor in catalysis. 468-474 serves as a coordination point for substrate; sequence AVTKKPR. Residues arginine 474 and 603–605 contribute to the GTP site; that span reads GNG.

Belongs to the adenylosuccinate synthetase family. In terms of assembly, homodimer. The cofactor is Mg(2+).

The protein resides in the cytoplasm. It carries out the reaction IMP + L-aspartate + GTP = N(6)-(1,2-dicarboxyethyl)-AMP + GDP + phosphate + 2 H(+). It functions in the pathway purine metabolism; AMP biosynthesis via de novo pathway; AMP from IMP: step 1/2. Functionally, plays an important role in the salvage pathway for purine nucleotide biosynthesis. Catalyzes the first committed step in the biosynthesis of AMP from IMP. This Trypanosoma cruzi (strain CL Brener) protein is Adenylosuccinate synthetase 1.